The chain runs to 301 residues: Golgi to ER traffic protein 2 (301 aa).

At 1–167 (MSEPVVDTAE…LEYNTYNQKL (167 aa)) the chain is on the cytoplasmic side. Low complexity predominate over residues 42–55 (SQGSSVKTSGVKSV). A disordered region spans residues 42–93 (SQGSSVKTSGVKSVLDQEKEATSSHDDDPEIQDITEITTPPPRTPPIGEDAP). A compositionally biased stretch (basic and acidic residues) spans 56 to 67 (LDQEKEATSSHD). A helical membrane pass occupies residues 168–188 (WKFRFLLVRVLVTLFNFFYHY). Topologically, residues 189-214 (TSISDFHASNYAYVRDLSSEEYPVRD) are lumenal. The helical transmembrane segment at 215 to 234 (FFTWFATSEVVLVAAYYSVF) threads the bilayer. Residues 235 to 278 (HSLGLFHAANQNSIILKVMSMGSMILPQLESYKPLVARFLGYYE) lie on the Cytoplasmic side of the membrane. The helical transmembrane segment at 279 to 299 (LLGIVLGGLSLVIVLFGLLSF) threads the bilayer. Over 300–301 (AN) the chain is Lumenal.

Belongs to the GET2 family. Component of the Golgi to ER traffic (GET) complex, which is composed of GET1, GET2 and GET3. Within the complex, GET1 and GET2 form a heterotetramer which is stabilized by phosphatidylinositol binding and which binds to the GET3 homodimer.

Its subcellular location is the endoplasmic reticulum membrane. It localises to the golgi apparatus membrane. Required for the post-translational delivery of tail-anchored (TA) proteins to the endoplasmic reticulum. Together with GET1, acts as a membrane receptor for soluble GET3, which recognizes and selectively binds the transmembrane domain of TA proteins in the cytosol. The GET complex cooperates with the HDEL receptor ERD2 to mediate the ATP-dependent retrieval of resident ER proteins that contain a C-terminal H-D-E-L retention signal from the Golgi to the ER. The protein is Golgi to ER traffic protein 2 of Candida dubliniensis (strain CD36 / ATCC MYA-646 / CBS 7987 / NCPF 3949 / NRRL Y-17841) (Yeast).